The sequence spans 416 residues: ATP-dependent Clp protease ATP-binding subunit ClpX (416 aa).

The ClpX-type ZB domain maps to 1 to 54 (MFKFGDEKGQLKCSFCGKSQEQVRKLVAGPGVYICDECIELCNEIIEEELNDDV). Residues C13, C16, C35, and C38 each coordinate Zn(2+). Residue 117–124 (PTGCGKTL) participates in ATP binding.

This sequence belongs to the ClpX chaperone family. In terms of assembly, component of the ClpX-ClpP complex. Forms a hexameric ring that, in the presence of ATP, binds to fourteen ClpP subunits assembled into a disk-like structure with a central cavity, resembling the structure of eukaryotic proteasomes.

In terms of biological role, ATP-dependent specificity component of the Clp protease. It directs the protease to specific substrates. Can perform chaperone functions in the absence of ClpP. This chain is ATP-dependent Clp protease ATP-binding subunit ClpX, found in Halothermothrix orenii (strain H 168 / OCM 544 / DSM 9562).